We begin with the raw amino-acid sequence, 156 residues long: Small ribosomal subunit protein uS7 (156 aa).

The protein belongs to the universal ribosomal protein uS7 family. Part of the 30S ribosomal subunit. Contacts proteins S9 and S11.

In terms of biological role, one of the primary rRNA binding proteins, it binds directly to 16S rRNA where it nucleates assembly of the head domain of the 30S subunit. Is located at the subunit interface close to the decoding center, probably blocks exit of the E-site tRNA. This is Small ribosomal subunit protein uS7 (rpsG) from Geobacillus stearothermophilus (Bacillus stearothermophilus).